We begin with the raw amino-acid sequence, 270 residues long: 2-C-methyl-D-erythritol 4-phosphate cytidylyltransferase (270 aa).

The tract at residues 1-33 (MSDESRPSPAETPATTFAETSAETSAAGRSPAR) is disordered. The span at 7–27 (PSPAETPATTFAETSAETSAA) shows a compositional bias: low complexity.

Belongs to the IspD/TarI cytidylyltransferase family. IspD subfamily.

It catalyses the reaction 2-C-methyl-D-erythritol 4-phosphate + CTP + H(+) = 4-CDP-2-C-methyl-D-erythritol + diphosphate. It participates in isoprenoid biosynthesis; isopentenyl diphosphate biosynthesis via DXP pathway; isopentenyl diphosphate from 1-deoxy-D-xylulose 5-phosphate: step 2/6. Catalyzes the formation of 4-diphosphocytidyl-2-C-methyl-D-erythritol from CTP and 2-C-methyl-D-erythritol 4-phosphate (MEP). The chain is 2-C-methyl-D-erythritol 4-phosphate cytidylyltransferase from Streptomyces coelicolor (strain ATCC BAA-471 / A3(2) / M145).